A 377-amino-acid polypeptide reads, in one-letter code: Chaperone protein DnaJ (377 aa).

The region spanning 4–69 (DYYEALGVTR…QKRAAYDRFG (66 aa)) is the J domain. Residues 135–213 (GKTAQIRVPT…CHGQGRVTQE (79 aa)) form a CR-type zinc finger. Zn(2+)-binding residues include cysteine 148, cysteine 151, cysteine 165, cysteine 168, cysteine 187, cysteine 190, cysteine 201, and cysteine 204. CXXCXGXG motif repeat units lie at residues 148 to 155 (CDECSGSG), 165 to 172 (CTMCSGSG), 187 to 194 (CPGCNGRG), and 201 to 208 (CEKCHGQG).

It belongs to the DnaJ family. As to quaternary structure, homodimer. Zn(2+) serves as cofactor.

It localises to the cytoplasm. Participates actively in the response to hyperosmotic and heat shock by preventing the aggregation of stress-denatured proteins and by disaggregating proteins, also in an autonomous, DnaK-independent fashion. Unfolded proteins bind initially to DnaJ; upon interaction with the DnaJ-bound protein, DnaK hydrolyzes its bound ATP, resulting in the formation of a stable complex. GrpE releases ADP from DnaK; ATP binding to DnaK triggers the release of the substrate protein, thus completing the reaction cycle. Several rounds of ATP-dependent interactions between DnaJ, DnaK and GrpE are required for fully efficient folding. Also involved, together with DnaK and GrpE, in the DNA replication of plasmids through activation of initiation proteins. In Brucella ovis (strain ATCC 25840 / 63/290 / NCTC 10512), this protein is Chaperone protein DnaJ.